The chain runs to 65 residues: Large ribosomal subunit protein bL35 (65 aa).

It belongs to the bacterial ribosomal protein bL35 family.

The protein is Large ribosomal subunit protein bL35 of Borrelia turicatae (strain 91E135).